The primary structure comprises 147 residues: Large ribosomal subunit protein uL13 (147 aa).

This sequence belongs to the universal ribosomal protein uL13 family. Part of the 50S ribosomal subunit.

In terms of biological role, this protein is one of the early assembly proteins of the 50S ribosomal subunit, although it is not seen to bind rRNA by itself. It is important during the early stages of 50S assembly. This is Large ribosomal subunit protein uL13 from Rhodococcus opacus (strain B4).